Here is a 319-residue protein sequence, read N- to C-terminus: Ribonucleoside-diphosphate reductase small chain (319 aa).

Fe cation contacts are provided by Asp70, Glu101, and His104. Tyr108 is a catalytic residue. Positions 163, 197, and 200 each coordinate Fe cation. The segment at 313–319 (FSLDVDF) is interaction with R1.

The protein belongs to the ribonucleoside diphosphate reductase small chain family. As to quaternary structure, interacts with RNR1/OPG080 subunit. Can interact with host RNR1 supunit. The cofactor is Fe cation.

The catalysed reaction is a 2'-deoxyribonucleoside 5'-diphosphate + [thioredoxin]-disulfide + H2O = a ribonucleoside 5'-diphosphate + [thioredoxin]-dithiol. Its function is as follows. Ribonucleoside-diphosphate reductase holoenzyme provides the precursors necessary for viral DNA synthesis. Allows virus growth in non-dividing cells. Catalyzes the biosynthesis of deoxyribonucleotides from the corresponding ribonucleotides. This Vaccinia virus (strain L-IVP) (VACV) protein is Ribonucleoside-diphosphate reductase small chain (OPG048).